A 218-amino-acid chain; its full sequence is Small ribosomal subunit protein uS3c (218 aa).

One can recognise a KH type-2 domain in the interval 47-118 (VQKNMRTSSG…KLNIAVTRIA (72 aa)).

The protein belongs to the universal ribosomal protein uS3 family. As to quaternary structure, part of the 30S ribosomal subunit.

The protein resides in the plastid. It is found in the chloroplast. The sequence is that of Small ribosomal subunit protein uS3c (rps3) from Nicotiana sylvestris (Wood tobacco).